The primary structure comprises 66 residues: Beta-toxin ChFII.9 (66 aa).

One can recognise an LCN-type CS-alpha/beta domain in the interval 1–66 (KEGYIVDYHT…VWPLPNKRCK (66 aa)). Intrachain disulfides connect C12–C65, C16–C41, C25–C46, and C29–C48. A Lysine amide modification is found at K66.

Expressed by the venom gland.

Its subcellular location is the secreted. Beta toxins bind voltage independently at site-4 of sodium channels (Nav) and shift the activation voltage toward more negative potentials, thereby affecting sodium channel activation CC and promoting spontaneous and repetitive firing. This is Beta-toxin ChFII.9 from Centruroides hirsutipalpus (Scorpion).